A 68-amino-acid polypeptide reads, in one-letter code: Large ribosomal subunit protein uL29 (68 aa).

Belongs to the universal ribosomal protein uL29 family.

The protein is Large ribosomal subunit protein uL29 of Streptococcus thermophilus (strain ATCC BAA-250 / LMG 18311).